The chain runs to 261 residues: Carnitinyl-CoA dehydratase (261 aa).

The active-site Nucleophile is Glu111. Catalysis depends on Glu131, which acts as the Proton acceptor.

The protein belongs to the enoyl-CoA hydratase/isomerase family.

It catalyses the reaction (R)-carnitinyl-CoA = crotonobetainyl-CoA + H2O. Its pathway is amine and polyamine metabolism; carnitine metabolism. Functionally, catalyzes the reversible dehydration of L-carnitinyl-CoA to crotonobetainyl-CoA. This Salmonella enteritidis PT4 (strain P125109) protein is Carnitinyl-CoA dehydratase.